Here is a 504-residue protein sequence, read N- to C-terminus: ATP synthase subunit alpha (504 aa).

Residue 170–177 (GDRQTGKT) coordinates ATP.

Belongs to the ATPase alpha/beta chains family. As to quaternary structure, F-type ATPases have 2 components, CF(1) - the catalytic core - and CF(0) - the membrane proton channel. CF(1) has five subunits: alpha(3), beta(3), gamma(1), delta(1), epsilon(1). CF(0) has four main subunits: a, b, b' and c.

It localises to the cellular thylakoid membrane. It carries out the reaction ATP + H2O + 4 H(+)(in) = ADP + phosphate + 5 H(+)(out). In terms of biological role, produces ATP from ADP in the presence of a proton gradient across the membrane. The alpha chain is a regulatory subunit. This is ATP synthase subunit alpha from Prochlorococcus marinus (strain MIT 9211).